The chain runs to 335 residues: Malate dehydrogenase 1 (335 aa).

NAD(+) is bound by residues 11–16 (GAGNVG) and Asp-35. 2 residues coordinate substrate: Arg-97 and Arg-103. Residues Asn-110 and 133 to 135 (VTN) each bind NAD(+). Substrate is bound by residues Asn-135 and Arg-166. His-190 serves as the catalytic Proton acceptor.

This sequence belongs to the LDH/MDH superfamily. MDH type 3 family.

The catalysed reaction is (S)-malate + NAD(+) = oxaloacetate + NADH + H(+). In terms of biological role, catalyzes the reversible oxidation of malate to oxaloacetate. This Aquifex aeolicus (strain VF5) protein is Malate dehydrogenase 1 (mdh1).